The primary structure comprises 636 residues: MPVAGGRIPDRDIAAIREKVRIEDVVGDYVQLRRAGADSLKGLCPFHDEKTPSFHVRPNHGHFHCFGCGEGGDVYAFIQKIEHVSFVEAVELLADKVGYTVTYTGSSTTNVQRDRGSRSRLLAANAAAAEFYAEALQSEEAAPARQYLTERNFDAAAAAKFGCGYAPSGWDKLTKHLLRKGFEFKELEAAGLSREGKRGPMDRFHRRLLWPIRVSSGETIGFGARRLFDDDPNQAKYVNTPETVLYKKSQVLFGLDLAKRDIAKGHQAVVVEGYTDVMAMHLAGVTTAVASCGTAFGEQHLSMLRRLMMDDNFFRGELIYVFDGDDAGRAAAVKAFEGEQNLSGQSFVAVAADGMDPCDLRLRSGDGALRDLVARRTPLFEFVIRSALAEHDLDSAEGRVAALRRCVPMLARIKDPTLRDEYARQLAGWVGWDNVAQVIGRVREEAKGGGRKDNNRRGQETAARPKPPPVQRPDPTDPTLWPQREALKAGLQYPALAGPVFDTLTVESFTHPGYGAVRTAMEAAGGTSAGITGAQWIETVREQTTSPAAANLVNELSVETINVEDDEKLPRYISSVLARLQEVWVGRQIAEVKSKLQRMSPVEQGDEYHALFGDLVAMESYRRSLLEQASGDDLTA.

The segment at 44-68 (CPFHDEKTPSFHVRPNHGHFHCFGC) adopts a CHC2-type zinc-finger fold. Residues 266–352 (HQAVVVEGYT…SGQSFVAVAA (87 aa)) enclose the Toprim domain. Glutamate 272, aspartate 323, and aspartate 325 together coordinate Mg(2+). Residues 443–459 (REEAKGGGRKDNNRRGQ) show a composition bias toward basic and acidic residues. The tract at residues 443–481 (REEAKGGGRKDNNRRGQETAARPKPPPVQRPDPTDPTLW) is disordered.

Belongs to the DnaG primase family. Monomer. Interacts with DnaB. Requires Zn(2+) as cofactor. Mg(2+) is required as a cofactor.

It catalyses the reaction ssDNA + n NTP = ssDNA/pppN(pN)n-1 hybrid + (n-1) diphosphate.. In terms of biological role, RNA polymerase that catalyzes the synthesis of short RNA molecules used as primers for DNA polymerase during DNA replication. This chain is DNA primase, found in Mycolicibacterium smegmatis (strain ATCC 700084 / mc(2)155) (Mycobacterium smegmatis).